The following is a 187-amino-acid chain: Elongation factor P (187 aa).

The protein belongs to the elongation factor P family.

The protein localises to the cytoplasm. It participates in protein biosynthesis; polypeptide chain elongation. Its function is as follows. Involved in peptide bond synthesis. Stimulates efficient translation and peptide-bond synthesis on native or reconstituted 70S ribosomes in vitro. Probably functions indirectly by altering the affinity of the ribosome for aminoacyl-tRNA, thus increasing their reactivity as acceptors for peptidyl transferase. This is Elongation factor P from Corynebacterium jeikeium (strain K411).